The primary structure comprises 83 residues: Mu-theraphotoxin-Hhn2p (83 aa).

The first 21 residues, 1–21 (MKASMYLALAGLVLLFVVGYA), serve as a signal peptide directing secretion. A propeptide spanning residues 22-48 (SESEEKEFPRELLSKIFAVDDFKGEER) is cleaved from the precursor. 3 disulfide bridges follow: C50-C65, C57-C70, and C64-C77. L81 is subject to Leucine amide.

Belongs to the neurotoxin 10 (Hwtx-1) family. 15 (Hntx-3) subfamily. Monomer. Expressed by the venom gland.

The protein resides in the secreted. In terms of biological role, lethal neurotoxin. Selectively blocks tetrodotoxin-sensitive voltage-gated sodium channels (Nav). Does not affect tetrodotoxin-resistant voltage-gated sodium channels or calcium channels. The polypeptide is Mu-theraphotoxin-Hhn2p (Cyriopagopus hainanus (Chinese bird spider)).